The sequence spans 197 residues: Transcription factor FapR (197 aa).

This sequence belongs to the FapR family.

Transcriptional factor involved in regulation of membrane lipid biosynthesis by repressing genes involved in fatty acid and phospholipid metabolism. The chain is Transcription factor FapR from Bacillus mycoides (strain KBAB4) (Bacillus weihenstephanensis).